A 67-amino-acid chain; its full sequence is Light-harvesting protein B-870 alpha chain (67 aa).

The Cytoplasmic portion of the chain corresponds to 1 to 12; sequence MWRIWRLFDPMR. A helical membrane pass occupies residues 13–33; the sequence is AMVAQAVFLLGLAVLIHLMLL. Position 29 (histidine 29) interacts with a bacteriochlorophyll. Residues 34–67 lie on the Periplasmic side of the membrane; it reads GTNKYNWLDGAKKAPVATAVAPVPAEVTSLAQAK.

Belongs to the antenna complex alpha subunit family. As to quaternary structure, an alpha/beta heterodimer. The core complex is formed by different alpha and beta chains, binding bacteriochlorophyll molecules, and arranged most probably in tetrameric structures disposed around the reaction center. The non-pigmented gamma chains may constitute additional components.

It is found in the cell inner membrane. Its function is as follows. Antenna complexes are light-harvesting systems, which transfer the excitation energy to the reaction centers. This chain is Light-harvesting protein B-870 alpha chain (pufA), found in Rubrivivax gelatinosus (strain NBRC 100245 / IL144).